Reading from the N-terminus, the 300-residue chain is Acetylglutamate kinase (300 aa).

Substrate-binding positions include 69–70 (GG), R91, and N197.

It belongs to the acetylglutamate kinase family. ArgB subfamily.

The protein resides in the cytoplasm. The enzyme catalyses N-acetyl-L-glutamate + ATP = N-acetyl-L-glutamyl 5-phosphate + ADP. It participates in amino-acid biosynthesis; L-arginine biosynthesis; N(2)-acetyl-L-ornithine from L-glutamate: step 2/4. Its function is as follows. Catalyzes the ATP-dependent phosphorylation of N-acetyl-L-glutamate. This is Acetylglutamate kinase from Kineococcus radiotolerans (strain ATCC BAA-149 / DSM 14245 / SRS30216).